Here is a 372-residue protein sequence, read N- to C-terminus: Glutamate 5-kinase (372 aa).

Lys14 serves as a coordination point for ATP. Residues Ser54, Asp141, and Asn153 each coordinate substrate. ATP-binding positions include 173-174 and 215-221; these read TD and SGGMLTK. The PUA domain maps to 280 to 358; the sequence is AGKVVVDEGA…HEIEHILGYI (79 aa).

It belongs to the glutamate 5-kinase family.

The protein localises to the cytoplasm. It carries out the reaction L-glutamate + ATP = L-glutamyl 5-phosphate + ADP. The protein operates within amino-acid biosynthesis; L-proline biosynthesis; L-glutamate 5-semialdehyde from L-glutamate: step 1/2. In terms of biological role, catalyzes the transfer of a phosphate group to glutamate to form L-glutamate 5-phosphate. The chain is Glutamate 5-kinase from Methylobacillus flagellatus (strain ATCC 51484 / DSM 6875 / VKM B-1610 / KT).